The chain runs to 294 residues: MLRLFQAASRASLRLSGSRVIHSLAEGAERPAEISEPRDSAGLLDPVLRKCELRIPVHRRPVQAWVESLRGFEQERIGLAELHPDVFATAPRLDIVHQVAIWQRNFRRISYANTKTRAEVSGGGRKPWQQKGSGRARHGSIRSPLWRGGGVAHGPRGPTSYYYMLPMKVRALGLKVALTVKLMQDDLHIVDSLELPTADPQYLTELAQYRHWGSSVLLVDLTHEEMPKNVVAATSGLNSFNLIPAVGLNVYSMLKHQTLVLTLPSVAFLEDKLLWQDSRYTPLYPFRLPYSDFP.

A disordered region spans residues 119–139; that stretch reads EVSGGGRKPWQQKGSGRARHG. Position 147 is an omega-N-methylarginine (R147).

It belongs to the universal ribosomal protein uL4 family. As to quaternary structure, component of the mitochondrial ribosome large subunit (39S) which comprises a 16S rRNA and about 50 distinct proteins. Interacts with MIEF1 upstream open reading frame protein.

It is found in the mitochondrion. This Mus musculus (Mouse) protein is Large ribosomal subunit protein uL4m (Mrpl4).